A 195-amino-acid chain; its full sequence is 4'-phosphopantetheinyl transferase AcpT (195 aa).

This sequence belongs to the P-Pant transferase superfamily. Gsp/Sfp/HetI/AcpT family.

It carries out the reaction apo-[ACP] + CoA = holo-[ACP] + adenosine 3',5'-bisphosphate + H(+). May be involved in an alternative pathway for phosphopantetheinyl transfer and holo-ACP synthesis in E.coli. The native apo-protein substrate is unknown. Is able to functionally replace AcpS in vivo but only when expressed at high levels. The chain is 4'-phosphopantetheinyl transferase AcpT from Escherichia coli (strain K12).